A 421-amino-acid chain; its full sequence is NAD-specific glutamate dehydrogenase (421 aa).

The substrate site is built by K71 and K95. The active-site Proton donor is K107. NAD(+) contacts are provided by T191 and N222. S355 is a binding site for substrate.

This sequence belongs to the Glu/Leu/Phe/Val dehydrogenases family. Homohexamer.

The catalysed reaction is L-glutamate + NAD(+) + H2O = 2-oxoglutarate + NH4(+) + NADH + H(+). The chain is NAD-specific glutamate dehydrogenase (gluD) from Clostridioides difficile (Peptoclostridium difficile).